Reading from the N-terminus, the 364-residue chain is MANKTVLFNKHLESNGKMVDFHGWDMPLNYGSQIEEHHAVRQDAGMFDVSHMTVVDVIGDDACAFLRKLLANDVAKLKVPGKALYGGMLDHNGGVIDDLITYYLSDTEYRIVVNSATREKDLAWINEQVKGFSVEVTERPELAMIAVQGPNAKAKAATVFNDAQNAAIEGMKPFFGVQAGSLFIATTGYTGETGYEVIVPNDEAEALWQAFLDAGIKPCGLGARDTLRLEAGMNLYGLDMDESVNPLAANMGWTVAWEPAERDFNGRQALEKIKAEGTDKLVGLIMDAKGVIRHGMSVFFTDSDGVEQQGTITSGTFSPTLGYSIAMARVPRSIGDVAEVEMRKKRVPVKVIAPSFVRNGKQAF.

Belongs to the GcvT family. As to quaternary structure, the glycine cleavage system is composed of four proteins: P, T, L and H.

It catalyses the reaction N(6)-[(R)-S(8)-aminomethyldihydrolipoyl]-L-lysyl-[protein] + (6S)-5,6,7,8-tetrahydrofolate = N(6)-[(R)-dihydrolipoyl]-L-lysyl-[protein] + (6R)-5,10-methylene-5,6,7,8-tetrahydrofolate + NH4(+). In terms of biological role, the glycine cleavage system catalyzes the degradation of glycine. This is Aminomethyltransferase from Shewanella pealeana (strain ATCC 700345 / ANG-SQ1).